Here is a 628-residue protein sequence, read N- to C-terminus: Chaperone protein HtpG (628 aa).

The a; substrate-binding stretch occupies residues 1-337 (MSEKKYTFET…SADLPLNVSR (337 aa)). Residues 338–554 (EILQHNKVID…DYGMSLHMQK (217 aa)) form a b region. The segment at 555-628 (MMEEAGQSFM…FVKLVNKYIR (74 aa)) is c.

It belongs to the heat shock protein 90 family. In terms of assembly, homodimer.

The protein resides in the cytoplasm. Its function is as follows. Molecular chaperone. Has ATPase activity. In Francisella tularensis subsp. holarctica (strain FTNF002-00 / FTA), this protein is Chaperone protein HtpG.